The primary structure comprises 235 residues: Phosphoribosylaminoimidazole-succinocarboxamide synthase (235 aa).

It belongs to the SAICAR synthetase family.

The catalysed reaction is 5-amino-1-(5-phospho-D-ribosyl)imidazole-4-carboxylate + L-aspartate + ATP = (2S)-2-[5-amino-1-(5-phospho-beta-D-ribosyl)imidazole-4-carboxamido]succinate + ADP + phosphate + 2 H(+). Its pathway is purine metabolism; IMP biosynthesis via de novo pathway; 5-amino-1-(5-phospho-D-ribosyl)imidazole-4-carboxamide from 5-amino-1-(5-phospho-D-ribosyl)imidazole-4-carboxylate: step 1/2. The chain is Phosphoribosylaminoimidazole-succinocarboxamide synthase from Streptococcus pneumoniae serotype 19F (strain G54).